The sequence spans 126 residues: MIRTMLQGKLHRVKVTQADLHYEGSCAIDQDFLDAAGILENEAIDIWNVSNGKRFSTYAIAAERGSKIISVNGAAAHCASVGDIVIIASFVTMSDEEARTWHPNVAYFEGDNEMKRTAKAIPVQVA.

Serine 25 acts as the Schiff-base intermediate with substrate; via pyruvic acid in catalysis. Serine 25 is modified (pyruvic acid (Ser)). Threonine 57 provides a ligand contact to substrate. Tyrosine 58 (proton donor) is an active-site residue. A substrate-binding site is contributed by 73-75 (GAA).

Belongs to the PanD family. In terms of assembly, heterooctamer of four alpha and four beta subunits. Pyruvate serves as cofactor. Is synthesized initially as an inactive proenzyme, which is activated by self-cleavage at a specific serine bond to produce a beta-subunit with a hydroxyl group at its C-terminus and an alpha-subunit with a pyruvoyl group at its N-terminus.

Its subcellular location is the cytoplasm. It carries out the reaction L-aspartate + H(+) = beta-alanine + CO2. The protein operates within cofactor biosynthesis; (R)-pantothenate biosynthesis; beta-alanine from L-aspartate: step 1/1. Its function is as follows. Catalyzes the pyruvoyl-dependent decarboxylation of aspartate to produce beta-alanine. The polypeptide is Aspartate 1-decarboxylase (Salmonella arizonae (strain ATCC BAA-731 / CDC346-86 / RSK2980)).